Consider the following 119-residue polypeptide: DNA-binding protein MMP0157 (119 aa).

The segment covering 1 to 12 has biased composition (basic and acidic residues); the sequence is MNPEEIRQRRLQ. The tract at residues 1 to 35 is disordered; that stretch reads MNPEEIRQRRLQEMQAKAQAQGAANDPEAQRQMQE.

The protein belongs to the PDCD5 family.

This Methanococcus maripaludis (strain DSM 14266 / JCM 13030 / NBRC 101832 / S2 / LL) protein is DNA-binding protein MMP0157.